Consider the following 393-residue polypeptide: Glutamyl-tRNA reductase (393 aa).

Residues 47–50, S98, 103–105, and Q109 each bind substrate; these read TCSR and ETD. The active-site Nucleophile is the C48. An NADP(+)-binding site is contributed by 177–182; that stretch reads GAGAVG.

It belongs to the glutamyl-tRNA reductase family. In terms of assembly, homodimer.

It carries out the reaction (S)-4-amino-5-oxopentanoate + tRNA(Glu) + NADP(+) = L-glutamyl-tRNA(Glu) + NADPH + H(+). Its pathway is porphyrin-containing compound metabolism; protoporphyrin-IX biosynthesis; 5-aminolevulinate from L-glutamyl-tRNA(Glu): step 1/2. Catalyzes the NADPH-dependent reduction of glutamyl-tRNA(Glu) to glutamate 1-semialdehyde (GSA). In Pyrobaculum neutrophilum (strain DSM 2338 / JCM 9278 / NBRC 100436 / V24Sta) (Thermoproteus neutrophilus), this protein is Glutamyl-tRNA reductase.